We begin with the raw amino-acid sequence, 315 residues long: Protoheme IX farnesyltransferase (315 aa).

9 consecutive transmembrane segments (helical) span residues 34 to 54 (VISL…GPIN), 55 to 75 (PLIA…AGAI), 105 to 125 (ALGF…LAAN), 127 to 147 (LAAF…TMWL), 155 to 175 (IVIG…ATTG), 177 to 197 (LGVL…PHFW), 226 to 246 (WQIL…SFLH), 251 to 271 (LYTG…VGVL), and 294 to 314 (YSLA…FLIM).

Belongs to the UbiA prenyltransferase family. Protoheme IX farnesyltransferase subfamily.

Its subcellular location is the cell inner membrane. It catalyses the reaction heme b + (2E,6E)-farnesyl diphosphate + H2O = Fe(II)-heme o + diphosphate. The protein operates within porphyrin-containing compound metabolism; heme O biosynthesis; heme O from protoheme: step 1/1. In terms of biological role, converts heme B (protoheme IX) to heme O by substitution of the vinyl group on carbon 2 of heme B porphyrin ring with a hydroxyethyl farnesyl side group. The chain is Protoheme IX farnesyltransferase from Gluconacetobacter diazotrophicus (strain ATCC 49037 / DSM 5601 / CCUG 37298 / CIP 103539 / LMG 7603 / PAl5).